The sequence spans 316 residues: NAD kinase 1 (316 aa).

The active-site Proton acceptor is Asp-67. 67 to 68 lines the NAD(+) pocket; that stretch reads DG. Residues 132–151 are disordered; it reads RSAEERADAPTPLQQPDVED. NAD(+) contacts are provided by residues 160 to 161, Arg-190, and Asp-192; that span reads ND.

Belongs to the NAD kinase family. It depends on a divalent metal cation as a cofactor.

The protein resides in the cytoplasm. The catalysed reaction is NAD(+) + ATP = ADP + NADP(+) + H(+). In terms of biological role, involved in the regulation of the intracellular balance of NAD and NADP, and is a key enzyme in the biosynthesis of NADP. Catalyzes specifically the phosphorylation on 2'-hydroxyl of the adenosine moiety of NAD to yield NADP. In Parasynechococcus marenigrum (strain WH8102), this protein is NAD kinase 1.